Reading from the N-terminus, the 441-residue chain is Mitochondrial distribution and morphology protein 12 (441 aa).

In terms of domain architecture, SMP-LTD spans 1 to 441 (MSIDIDWERA…VYPSFWTFLV (441 aa)). Disordered regions lie at residues 70 to 89 (YEDG…PMRE) and 180 to 289 (TPLR…RMRE). 2 stretches are compositionally biased toward polar residues: residues 226-245 (SRPS…SVST) and 253-263 (SSQTVLANNPG).

It belongs to the MDM12 family. In terms of assembly, component of the ER-mitochondria encounter structure (ERMES) or MDM complex, composed of MMM1, MDM10, MDM12 and MDM34. An MMM1 homodimer associates with one molecule of MDM12 on each side in a pairwise head-to-tail manner, and the SMP-LTD domains of MMM1 and MDM12 generate a continuous hydrophobic tunnel for phospholipid trafficking.

It is found in the mitochondrion outer membrane. It localises to the endoplasmic reticulum membrane. In terms of biological role, component of the ERMES/MDM complex, which serves as a molecular tether to connect the endoplasmic reticulum (ER) and mitochondria. Components of this complex are involved in the control of mitochondrial shape and protein biogenesis, and function in nonvesicular lipid trafficking between the ER and mitochondria. MDM12 is required for the interaction of the ER-resident membrane protein MMM1 and the outer mitochondrial membrane-resident beta-barrel protein MDM10. The MDM12-MMM1 subcomplex functions in the major beta-barrel assembly pathway that is responsible for biogenesis of all mitochondrial outer membrane beta-barrel proteins, and acts in a late step after the SAM complex. The MDM10-MDM12-MMM1 subcomplex further acts in the TOM40-specific pathway after the action of the MDM12-MMM1 complex. Essential for establishing and maintaining the structure of mitochondria and maintenance of mtDNA nucleoids. The chain is Mitochondrial distribution and morphology protein 12 from Paracoccidioides brasiliensis (strain Pb03).